The sequence spans 346 residues: Methylthioribose-1-phosphate isomerase (346 aa).

Residues 46–48, Arg-89, and Gln-196 each bind substrate; that span reads RGA. Asp-237 acts as the Proton donor in catalysis. Residue 247–248 coordinates substrate; the sequence is NK.

It belongs to the eIF-2B alpha/beta/delta subunits family. MtnA subfamily.

It catalyses the reaction 5-(methylsulfanyl)-alpha-D-ribose 1-phosphate = 5-(methylsulfanyl)-D-ribulose 1-phosphate. The protein operates within amino-acid biosynthesis; L-methionine biosynthesis via salvage pathway; L-methionine from S-methyl-5-thio-alpha-D-ribose 1-phosphate: step 1/6. In terms of biological role, catalyzes the interconversion of methylthioribose-1-phosphate (MTR-1-P) into methylthioribulose-1-phosphate (MTRu-1-P). The protein is Methylthioribose-1-phosphate isomerase of Trichlorobacter lovleyi (strain ATCC BAA-1151 / DSM 17278 / SZ) (Geobacter lovleyi).